The following is a 256-amino-acid chain: Hemin import ATP-binding protein HmuV (256 aa).

An ABC transporter domain is found at 2-238 (ISAQNLVYSL…QALTMLYGAD (237 aa)). 34–41 (GPNGAGKS) serves as a coordination point for ATP.

This sequence belongs to the ABC transporter superfamily. Heme (hemin) importer (TC 3.A.1.14.5) family. In terms of assembly, the complex is composed of two ATP-binding proteins (HmuV), two transmembrane proteins (HmuU) and a solute-binding protein (HmuT).

The protein localises to the cell inner membrane. In terms of biological role, part of the ABC transporter complex HmuTUV involved in hemin import. Responsible for energy coupling to the transport system. The polypeptide is Hemin import ATP-binding protein HmuV (Escherichia coli O157:H7).